We begin with the raw amino-acid sequence, 418 residues long: Translation initiation factor 2 subunit gamma (418 aa).

The 200-residue stretch at glutamine 7 to glutamine 206 folds into the tr-type G domain. Residues glycine 16–threonine 23 form a G1 region. Mg(2+) is bound by residues aspartate 19, threonine 23, glycine 44, and threonine 46. Aspartate 19–threonine 24 is a binding site for GTP. Residues glycine 44–lysine 48 form a G2 region. Zn(2+) contacts are provided by cysteine 59, cysteine 62, cysteine 74, and cysteine 77. Residues aspartate 93–glycine 96 form a G3 region. Residues asparagine 149–aspartate 152 and serine 184–leucine 186 each bind GTP. Residues asparagine 149–aspartate 152 form a G4 region. A G5 region spans residues serine 184–leucine 186.

The protein belongs to the TRAFAC class translation factor GTPase superfamily. Classic translation factor GTPase family. EIF2G subfamily. In terms of assembly, heterotrimer composed of an alpha, a beta and a gamma chain. Mg(2+) is required as a cofactor.

The enzyme catalyses GTP + H2O = GDP + phosphate + H(+). EIF-2 functions in the early steps of protein synthesis by forming a ternary complex with GTP and initiator tRNA. The polypeptide is Translation initiation factor 2 subunit gamma (Sulfurisphaera tokodaii (strain DSM 16993 / JCM 10545 / NBRC 100140 / 7) (Sulfolobus tokodaii)).